The sequence spans 79 residues: Exodeoxyribonuclease 7 small subunit (79 aa).

The protein belongs to the XseB family. As to quaternary structure, heterooligomer composed of large and small subunits.

It is found in the cytoplasm. The enzyme catalyses Exonucleolytic cleavage in either 5'- to 3'- or 3'- to 5'-direction to yield nucleoside 5'-phosphates.. Functionally, bidirectionally degrades single-stranded DNA into large acid-insoluble oligonucleotides, which are then degraded further into small acid-soluble oligonucleotides. This chain is Exodeoxyribonuclease 7 small subunit, found in Geobacillus kaustophilus (strain HTA426).